The following is a 303-amino-acid chain: Aspartate carbamoyltransferase catalytic subunit (303 aa).

Carbamoyl phosphate is bound by residues arginine 51 and threonine 52. Lysine 80 is an L-aspartate binding site. Arginine 101, histidine 129, and glutamine 132 together coordinate carbamoyl phosphate. The L-aspartate site is built by arginine 162 and arginine 221. 2 residues coordinate carbamoyl phosphate: leucine 260 and proline 261.

This sequence belongs to the aspartate/ornithine carbamoyltransferase superfamily. ATCase family. As to quaternary structure, heterooligomer of catalytic and regulatory chains.

It carries out the reaction carbamoyl phosphate + L-aspartate = N-carbamoyl-L-aspartate + phosphate + H(+). It functions in the pathway pyrimidine metabolism; UMP biosynthesis via de novo pathway; (S)-dihydroorotate from bicarbonate: step 2/3. In terms of biological role, catalyzes the condensation of carbamoyl phosphate and aspartate to form carbamoyl aspartate and inorganic phosphate, the committed step in the de novo pyrimidine nucleotide biosynthesis pathway. The protein is Aspartate carbamoyltransferase catalytic subunit of Saccharolobus islandicus (strain M.14.25 / Kamchatka #1) (Sulfolobus islandicus).